The chain runs to 591 residues: Aspartate--tRNA(Asp/Asn) ligase (591 aa).

Glu-170 contributes to the L-aspartate binding site. Positions 194–197 (QLFK) are aspartate. Residue Arg-216 participates in L-aspartate binding. Residues 216-218 (RDE) and Gln-225 contribute to the ATP site. His-448 contacts L-aspartate. Glu-482 contributes to the ATP binding site. Arg-489 contacts L-aspartate. 534 to 537 (GWDR) provides a ligand contact to ATP. Positions 559-591 (GGVDPLTDAPAPITEQQRKESGIDVKPEPSKPH) are disordered. A compositionally biased stretch (basic and acidic residues) spans 574 to 591 (QQRKESGIDVKPEPSKPH).

The protein belongs to the class-II aminoacyl-tRNA synthetase family. Type 1 subfamily. Homodimer.

It localises to the cytoplasm. The enzyme catalyses tRNA(Asx) + L-aspartate + ATP = L-aspartyl-tRNA(Asx) + AMP + diphosphate. In terms of biological role, aspartyl-tRNA synthetase with relaxed tRNA specificity since it is able to aspartylate not only its cognate tRNA(Asp) but also tRNA(Asn). Reaction proceeds in two steps: L-aspartate is first activated by ATP to form Asp-AMP and then transferred to the acceptor end of tRNA(Asp/Asn). This chain is Aspartate--tRNA(Asp/Asn) ligase, found in Mycobacterium avium (strain 104).